A 164-amino-acid polypeptide reads, in one-letter code: Peptide deformylase-like (164 aa).

Glutamate 133 is a catalytic residue.

This sequence belongs to the polypeptide deformylase family.

The polypeptide is Peptide deformylase-like (Agrobacterium fabrum (strain C58 / ATCC 33970) (Agrobacterium tumefaciens (strain C58))).